A 180-amino-acid chain; its full sequence is ADP-ribosylation factor 5 (180 aa).

Gly2 carries the N-myristoyl glycine lipid modification. GTP-binding positions include 24 to 31, 67 to 71, and 126 to 129; these read GLDAAGKT, DVGGQ, and NKQD.

It belongs to the small GTPase superfamily. Arf family.

The protein resides in the golgi apparatus. Its function is as follows. GTP-binding protein involved in protein trafficking; may modulate vesicle budding and uncoating within the Golgi apparatus. This is ADP-ribosylation factor 5 (ARF5) from Gallus gallus (Chicken).